Consider the following 322-residue polypeptide: 4-diphosphocytidyl-2-C-methyl-D-erythritol kinase (322 aa).

Lys-27 is a catalytic residue. 112–122 (PVAGGMAGGSA) is an ATP binding site. Asp-154 is an active-site residue.

It belongs to the GHMP kinase family. IspE subfamily.

The catalysed reaction is 4-CDP-2-C-methyl-D-erythritol + ATP = 4-CDP-2-C-methyl-D-erythritol 2-phosphate + ADP + H(+). It functions in the pathway isoprenoid biosynthesis; isopentenyl diphosphate biosynthesis via DXP pathway; isopentenyl diphosphate from 1-deoxy-D-xylulose 5-phosphate: step 3/6. Functionally, catalyzes the phosphorylation of the position 2 hydroxy group of 4-diphosphocytidyl-2C-methyl-D-erythritol. This chain is 4-diphosphocytidyl-2-C-methyl-D-erythritol kinase, found in Mycolicibacterium smegmatis (strain ATCC 700084 / mc(2)155) (Mycobacterium smegmatis).